Consider the following 740-residue polypeptide: Polyribonucleotide nucleotidyltransferase (740 aa).

Mg(2+) contacts are provided by Asp492 and Asp498. Residues 559 to 618 (PMVQTLEIQKEKIRDVIGLGGKVIKELCKTFDVEIDISENGEVKVWGNVGENVKKAVQSI) form the KH domain. Residues 628–696 (GDIFDGEVVK…HKNRVKLTLR (69 aa)) form the S1 motif domain.

This sequence belongs to the polyribonucleotide nucleotidyltransferase family. The cofactor is Mg(2+).

It is found in the cytoplasm. The enzyme catalyses RNA(n+1) + phosphate = RNA(n) + a ribonucleoside 5'-diphosphate. In terms of biological role, involved in mRNA degradation. Catalyzes the phosphorolysis of single-stranded polyribonucleotides processively in the 3'- to 5'-direction. This is Polyribonucleotide nucleotidyltransferase from Orientia tsutsugamushi (strain Boryong) (Rickettsia tsutsugamushi).